A 398-amino-acid chain; its full sequence is Probable sugar efflux transporter (398 aa).

Transmembrane regions (helical) follow at residues 15–35 (VVTL…PVGL), 50–70 (VGIM…PFML), 81–101 (LIGL…AWNF), 103–123 (VLVI…SITA), 136–156 (AQAL…GLPI), 169–189 (TFFA…KLLP), 209–229 (PALM…YTAY), 246–266 (FATV…VLFG), 275–295 (LLVS…MPAA), 301–321 (LAIL…GMQV), 333–353 (VAMS…ALVG), and 364–384 (AIGY…ILIF).

This sequence belongs to the major facilitator superfamily. SotB (TC 2.A.1.2) family.

It localises to the cell inner membrane. Functionally, involved in the efflux of sugars. The physiological role may be the reduction of the intracellular concentration of toxic sugars or sugar metabolites. The chain is Probable sugar efflux transporter from Enterobacter sp. (strain 638).